A 480-amino-acid polypeptide reads, in one-letter code: 2-phosphoxylose phosphatase 1 (480 aa).

The Cytoplasmic segment spans residues 1–6; the sequence is MLYRNR. The chain crosses the membrane as a helical; Signal-anchor for type II membrane protein span at residues 7-27; the sequence is FLVLLALAGLLAFLSLSLQFF. Residues 28–480 are Lumenal-facing; sequence HLIPVSTTKN…YYDACHGEGA (453 aa). Histidine 97 (nucleophile) is an active-site residue. N-linked (GlcNAc...) asparagine glycosylation is found at asparagine 194, asparagine 305, and asparagine 354. The Proton donor role is filled by aspartate 379.

It belongs to the histidine acid phosphatase family. In terms of assembly, interacts with B3GAT3; the interaction increases the 2-phosphoxylose phosphatase activity of PXYLP1 during completion of linkage region formation in a B3GAT3-mediated manner.

The protein resides in the golgi apparatus membrane. The catalysed reaction is 3-O-[beta-D-GlcA-(1-&gt;3)-beta-D-Gal-(1-&gt;3)-beta-D-Gal-(1-&gt;4)-beta-D-2-O-P-Xyl]-L-seryl-[protein] + H2O = 3-O-(beta-D-GlcA-(1-&gt;3)-beta-D-Gal-(1-&gt;3)-beta-D-Gal-(1-&gt;4)-beta-D-Xyl)-L-seryl-[protein] + phosphate. Functionally, responsible for the 2-O-dephosphorylation of xylose in the glycosaminoglycan-protein linkage region of proteoglycans thereby regulating the amount of mature glycosaminoglycan (GAG) chains. Sulfated glycosaminoglycans (GAGs), including heparan sulfate and chondroitin sulfate, are synthesized on the so-called common GAG-protein linkage region (GlcUAbeta1-3Galbeta1-3Galbeta1-4Xylbeta1-O-Ser) of core proteins, which is formed by the stepwise addition of monosaccharide residues by the respective specific glycosyltransferases. Xylose 2-O-dephosphorylation during completion of linkage region formation is a prerequisite for the initiation and efficient elongation of the repeating disaccharide region of GAG chains. The protein is 2-phosphoxylose phosphatase 1 of Rattus norvegicus (Rat).